Consider the following 501-residue polypeptide: Maturase K (501 aa).

The protein belongs to the intron maturase 2 family. MatK subfamily.

The protein resides in the plastid. The protein localises to the chloroplast. Usually encoded in the trnK tRNA gene intron. Probably assists in splicing its own and other chloroplast group II introns. This Amborella trichopoda protein is Maturase K.